The sequence spans 381 residues: Alkanesulfonate monooxygenase (381 aa).

This sequence belongs to the SsuD family. As to quaternary structure, homotetramer.

It catalyses the reaction an alkanesulfonate + FMNH2 + O2 = an aldehyde + FMN + sulfite + H2O + 2 H(+). In terms of biological role, catalyzes the desulfonation of aliphatic sulfonates. The polypeptide is Alkanesulfonate monooxygenase (Escherichia fergusonii (strain ATCC 35469 / DSM 13698 / CCUG 18766 / IAM 14443 / JCM 21226 / LMG 7866 / NBRC 102419 / NCTC 12128 / CDC 0568-73)).